We begin with the raw amino-acid sequence, 165 residues long: MADEHSFDISASVDIMEVKNALETAKKEVSSRFDFKGLKAQIELNEKEKTITLISSSDSKIDALKDIVLSKLIKREIPPVAITELKRESAGGANTKCSLKLNDTLDSLNAKKITKVIKDEKLKVNASIRGEEVRVTSKSIDELQNVIKLVKDLNLELPLSFKNLK.

Belongs to the YajQ family.

In terms of biological role, nucleotide-binding protein. In Campylobacter fetus subsp. fetus (strain 82-40), this protein is Nucleotide-binding protein CFF8240_1664.